The following is a 181-amino-acid chain: Adenylate kinase (181 aa).

10-15 (GAGKGT) serves as a coordination point for ATP. The NMP stretch occupies residues 30 to 59 (STGELFRSNIENGTKLGLEAKRYLDAGDLV). AMP is bound by residues Thr-31, Arg-36, 57 to 59 (DLV), 85 to 88 (GFPR), and Gln-92. An LID region spans residues 126-132 (ARGRADD). Residue Arg-127 participates in ATP binding. Arg-129 and Arg-140 together coordinate AMP. Gly-166 lines the ATP pocket.

It belongs to the adenylate kinase family. As to quaternary structure, monomer.

It localises to the cytoplasm. It catalyses the reaction AMP + ATP = 2 ADP. It functions in the pathway purine metabolism; AMP biosynthesis via salvage pathway; AMP from ADP: step 1/1. Catalyzes the reversible transfer of the terminal phosphate group between ATP and AMP. Plays an important role in cellular energy homeostasis and in adenine nucleotide metabolism. This chain is Adenylate kinase, found in Mycolicibacterium paratuberculosis (strain ATCC BAA-968 / K-10) (Mycobacterium paratuberculosis).